The sequence spans 73 residues: Translation initiation factor IF-1 (73 aa).

The S1-like domain maps to 1–73 (MSKKKDVIEM…TRGRITYRYK (73 aa)).

Belongs to the IF-1 family. In terms of assembly, component of the 30S ribosomal translation pre-initiation complex which assembles on the 30S ribosome in the order IF-2 and IF-3, IF-1 and N-formylmethionyl-tRNA(fMet); mRNA recruitment can occur at any time during PIC assembly.

The protein resides in the cytoplasm. Its function is as follows. One of the essential components for the initiation of protein synthesis. Stabilizes the binding of IF-2 and IF-3 on the 30S subunit to which N-formylmethionyl-tRNA(fMet) subsequently binds. Helps modulate mRNA selection, yielding the 30S pre-initiation complex (PIC). Upon addition of the 50S ribosomal subunit IF-1, IF-2 and IF-3 are released leaving the mature 70S translation initiation complex. The sequence is that of Translation initiation factor IF-1 from Chloroflexus aurantiacus (strain ATCC 29366 / DSM 635 / J-10-fl).